Consider the following 1273-residue polypeptide: Ras-specific guanine nucleotide-releasing factor 1 (1273 aa).

The PH 1 domain maps to 22–129 (DGTRKGYLSK…WVAAIAHASY (108 aa)). The 26-residue stretch at 204-229 (KKIKKVQSFLRGWLCRRKWKTIIQDY) folds into the IQ domain. The 187-residue stretch at 240 to 426 (KRNQVVFSML…EELSRIMHDE (187 aa)) folds into the DH domain. In terms of domain architecture, PH 2 spans 467 to 584 (PMSEKGKITR…WTSDISQCVD (118 aa)). A phosphoserine; by PLK2 mark is found at Ser577 and Ser626. Residues 644–761 (KVLQIRYASV…SRRRKLSLNI (118 aa)) form the N-terminal Ras-GEF domain. The disordered stretch occupies residues 724–754 (YGEPPKSPRATRKFSSPPPLSITKTSSPSRR). Position 758 is a phosphoserine (Ser758). 2 positions are modified to phosphoserine; by PLK2: Ser779 and Ser800. The disordered stretch occupies residues 809 to 874 (TNKIPDEGDT…PKSVKNKNSS (66 aa)). The span at 842–854 (SDIDQNQSDDGDT) shows a compositional bias: acidic residues. Residues 855 to 867 (ETSPTKSPTTPKS) show a composition bias toward low complexity. In terms of domain architecture, Ras-GEF spans 1038–1270 (SALEIAEQLT…YESSLRIEPK (233 aa)).

As to quaternary structure, homooligomer and heterooligomer with RASGRF2. Interacts with USP8, thereby regulating its stability. Phosphorylated by PLK2, leading to ubiquitination and degradation by the proteasome. Post-translationally, ubiquitinated and degraded following phosphorylation by PLK2. In terms of processing, phosphorylated by SRC and LCK. Phosphorylation by LCK increases its capacity to stimulate the GDP/GTP exchange on Ras, whereas its phosphorylation by SRC seems not to have an effect on stimulation activity.

Promotes the exchange of Ras-bound GDP by GTP. The protein is Ras-specific guanine nucleotide-releasing factor 1 (RASGRF1) of Homo sapiens (Human).